Reading from the N-terminus, the 122-residue chain is Large ribosomal subunit protein uL14 (122 aa).

It belongs to the universal ribosomal protein uL14 family. In terms of assembly, part of the 50S ribosomal subunit. Forms a cluster with proteins L3 and L19. In the 70S ribosome, L14 and L19 interact and together make contacts with the 16S rRNA in bridges B5 and B8.

In terms of biological role, binds to 23S rRNA. Forms part of two intersubunit bridges in the 70S ribosome. The protein is Large ribosomal subunit protein uL14 of Nautilia profundicola (strain ATCC BAA-1463 / DSM 18972 / AmH).